Reading from the N-terminus, the 87-residue chain is U3-theraphotoxin-Cg1b (87 aa).

Residues 1-23 (MRTLTLIAIVTCAALVIFHAAAA) form the signal peptide. Positions 24-48 (EELEAQDVIQPEDIFTGVATLEEDR) are excised as a propeptide. Cystine bridges form between cysteine 52–cysteine 65, cysteine 56–cysteine 79, and cysteine 73–cysteine 84.

The protein belongs to the neurotoxin 12 (Hwtx-2) family. 03 (juruin) subfamily. In terms of tissue distribution, expressed by the venom gland.

It localises to the secreted. Its function is as follows. Probable ion channel inhibitor. The protein is U3-theraphotoxin-Cg1b of Chilobrachys guangxiensis (Chinese earth tiger tarantula).